Consider the following 151-residue polypeptide: FUN14 domain-containing protein 1A (151 aa).

The short motif at 14–17 is the YXXL element; sequence YEVL. The next 3 membrane-spanning stretches (helical) occupy residues 44-64, 71-91, and 130-150; these read YSVA…GFLF, AATA…GGYI, and FVKK…LGLA.

Belongs to the FUN14 family.

The protein localises to the mitochondrion outer membrane. Its function is as follows. Acts as an activator of hypoxia-induced mitophagy, an important mechanism for mitochondrial quality control. The chain is FUN14 domain-containing protein 1A (fundc1-a) from Xenopus laevis (African clawed frog).